The sequence spans 118 residues: Mating-type P-specific polypeptide Pc (118 aa).

The segment at residues 29–97 is a DNA-binding region (HMG box); that stretch reads KTTIYKNGFM…VRRQIAKLER (69 aa).

The protein localises to the nucleus. In terms of biological role, mating type proteins are sequence specific DNA-binding proteins that act as master switches in yeast differentiation by controlling gene expression in a cell type-specific fashion. Required for conjugation and efficient meiosis. The protein is Mating-type P-specific polypeptide Pc (mat2-Pc) of Schizosaccharomyces pombe (Fission yeast).